A 295-amino-acid polypeptide reads, in one-letter code: 33 kDa chaperonin (295 aa).

2 cysteine pairs are disulfide-bonded: cysteine 237–cysteine 239 and cysteine 270–cysteine 273.

This sequence belongs to the HSP33 family. Under oxidizing conditions two disulfide bonds are formed involving the reactive cysteines. Under reducing conditions zinc is bound to the reactive cysteines and the protein is inactive.

The protein localises to the cytoplasm. Functionally, redox regulated molecular chaperone. Protects both thermally unfolding and oxidatively damaged proteins from irreversible aggregation. Plays an important role in the bacterial defense system toward oxidative stress. The chain is 33 kDa chaperonin from Shouchella clausii (strain KSM-K16) (Alkalihalobacillus clausii).